Here is an 883-residue protein sequence, read N- to C-terminus: Phosphoenolpyruvate carboxylase (883 aa).

Residues H138 and K546 contribute to the active site.

It belongs to the PEPCase type 1 family. Requires Mg(2+) as cofactor.

It catalyses the reaction oxaloacetate + phosphate = phosphoenolpyruvate + hydrogencarbonate. Its function is as follows. Forms oxaloacetate, a four-carbon dicarboxylic acid source for the tricarboxylic acid cycle. The protein is Phosphoenolpyruvate carboxylase of Shigella dysenteriae serotype 1 (strain Sd197).